Consider the following 206-residue polypeptide: Crossover junction endodeoxyribonuclease RuvC (206 aa).

Active-site residues include aspartate 7, glutamate 67, and aspartate 138. 3 residues coordinate Mg(2+): aspartate 7, glutamate 67, and aspartate 138.

The protein belongs to the RuvC family. As to quaternary structure, homodimer which binds Holliday junction (HJ) DNA. The HJ becomes 2-fold symmetrical on binding to RuvC with unstacked arms; it has a different conformation from HJ DNA in complex with RuvA. In the full resolvosome a probable DNA-RuvA(4)-RuvB(12)-RuvC(2) complex forms which resolves the HJ. Mg(2+) serves as cofactor.

The protein resides in the cytoplasm. The enzyme catalyses Endonucleolytic cleavage at a junction such as a reciprocal single-stranded crossover between two homologous DNA duplexes (Holliday junction).. The RuvA-RuvB-RuvC complex processes Holliday junction (HJ) DNA during genetic recombination and DNA repair. Endonuclease that resolves HJ intermediates. Cleaves cruciform DNA by making single-stranded nicks across the HJ at symmetrical positions within the homologous arms, yielding a 5'-phosphate and a 3'-hydroxyl group; requires a central core of homology in the junction. The consensus cleavage sequence is 5'-(A/T)TT(C/G)-3'. Cleavage occurs on the 3'-side of the TT dinucleotide at the point of strand exchange. HJ branch migration catalyzed by RuvA-RuvB allows RuvC to scan DNA until it finds its consensus sequence, where it cleaves and resolves the cruciform DNA. This Anaeromyxobacter sp. (strain Fw109-5) protein is Crossover junction endodeoxyribonuclease RuvC.